The sequence spans 265 residues: Urease accessory protein UreH (265 aa).

The protein belongs to the UreD family. In terms of assembly, ureH, UreF and UreG form a complex that acts as a GTP-hydrolysis-dependent molecular chaperone, activating the urease apoprotein by helping to assemble the nickel containing metallocenter of UreC. The UreE protein probably delivers the nickel.

It localises to the cytoplasm. Functionally, required for maturation of urease via the functional incorporation of the urease nickel metallocenter. In Helicobacter pylori (strain G27), this protein is Urease accessory protein UreH.